We begin with the raw amino-acid sequence, 291 residues long: Elongation factor Ts (291 aa).

The involved in Mg(2+) ion dislocation from EF-Tu stretch occupies residues 80–83 (TDFV).

Belongs to the EF-Ts family.

It is found in the cytoplasm. Functionally, associates with the EF-Tu.GDP complex and induces the exchange of GDP to GTP. It remains bound to the aminoacyl-tRNA.EF-Tu.GTP complex up to the GTP hydrolysis stage on the ribosome. The chain is Elongation factor Ts from Ligilactobacillus salivarius (strain UCC118) (Lactobacillus salivarius).